Reading from the N-terminus, the 432-residue chain is Nuclear pore complex-interacting protein family member B8 (432 aa).

Disordered stretches follow at residues 260–280 and 353–420; these read RMGR…NSLS and SPLP…LRTR. Over residues 270–280 the composition is skewed to polar residues; that stretch reads QQHSITDNSLS. The segment covering 374–402 has biased composition (basic and acidic residues); that stretch reads EVEKPPKPKRWRVDEVEQSPKPKRQREAE. Basic residues predominate over residues 408–420; sequence KPKRRRLSKLRTR.

This sequence belongs to the NPIP family.

This Homo sapiens (Human) protein is Nuclear pore complex-interacting protein family member B8 (NPIPB8).